The following is a 22-amino-acid chain: Mu-conotoxin CnIIIC (22 aa).

A Pyrrolidone carboxylic acid; partial modification is found at Q1. Intrachain disulfides connect C3/C15, C4/C21, and C10/C22. Cysteine amide is present on C22.

The protein belongs to the conotoxin M superfamily. In terms of tissue distribution, expressed by the venom duct.

Its subcellular location is the secreted. Mu-conotoxins block voltage-gated sodium channels (Nav). This synthetic toxin blocks both voltage-gated sodium channels and nicotinic acetylcholine receptor (nAChR). Inhibits the skeletal muscle rNav1.4/SCN4A (IC(50)=1.3 nM) and the brain rNav1.2/SCN2A in a long-lasting manner. A low inhibition is also observed on neuronal mNav1.6/SCN8A and mNav1.7/SCN9A. Modestly blocks nAChR alpha-3/beta-2 subtype (IC(50)=450 nM) (partially reversible) and, to a lesser extent, alpha-7 and alpha-4/beta-2 subtypes (reversible). In vitro, decreases twitch tension in mouse hemidiaphragms (IC(50)=150 nM), and displays a high blocking effect in mouse extensor digitorum longus muscles (IC(50)=46 nM). In Conus consors (Singed cone), this protein is Mu-conotoxin CnIIIC.